Consider the following 233-residue polypeptide: 5'-methylthioadenosine/S-adenosylhomocysteine nucleosidase (233 aa).

Glu12 (proton acceptor) is an active-site residue. Substrate-binding positions include Gly78, Ile156, and 177 to 178; that span reads ME. The active-site Proton donor is Asp201.

It belongs to the PNP/UDP phosphorylase family. MtnN subfamily.

It catalyses the reaction S-adenosyl-L-homocysteine + H2O = S-(5-deoxy-D-ribos-5-yl)-L-homocysteine + adenine. It carries out the reaction S-methyl-5'-thioadenosine + H2O = 5-(methylsulfanyl)-D-ribose + adenine. The enzyme catalyses 5'-deoxyadenosine + H2O = 5-deoxy-D-ribose + adenine. It participates in amino-acid biosynthesis; L-methionine biosynthesis via salvage pathway; S-methyl-5-thio-alpha-D-ribose 1-phosphate from S-methyl-5'-thioadenosine (hydrolase route): step 1/2. In terms of biological role, catalyzes the irreversible cleavage of the glycosidic bond in both 5'-methylthioadenosine (MTA) and S-adenosylhomocysteine (SAH/AdoHcy) to adenine and the corresponding thioribose, 5'-methylthioribose and S-ribosylhomocysteine, respectively. Also cleaves 5'-deoxyadenosine, a toxic by-product of radical S-adenosylmethionine (SAM) enzymes, into 5-deoxyribose and adenine. This Listeria monocytogenes serovar 1/2a (strain ATCC BAA-679 / EGD-e) protein is 5'-methylthioadenosine/S-adenosylhomocysteine nucleosidase.